Here is a 427-residue protein sequence, read N- to C-terminus: Glutamyl-tRNA reductase (427 aa).

Substrate-binding positions include 48 to 51 (TCNR), Ser99, 104 to 106 (EDQ), and Gln110. The Nucleophile role is filled by Cys49. Position 179–184 (179–184 (GAGEMG)) interacts with NADP(+).

This sequence belongs to the glutamyl-tRNA reductase family. In terms of assembly, homodimer.

The catalysed reaction is (S)-4-amino-5-oxopentanoate + tRNA(Glu) + NADP(+) = L-glutamyl-tRNA(Glu) + NADPH + H(+). It functions in the pathway porphyrin-containing compound metabolism; protoporphyrin-IX biosynthesis; 5-aminolevulinate from L-glutamyl-tRNA(Glu): step 1/2. Functionally, catalyzes the NADPH-dependent reduction of glutamyl-tRNA(Glu) to glutamate 1-semialdehyde (GSA). The sequence is that of Glutamyl-tRNA reductase from Methanocella arvoryzae (strain DSM 22066 / NBRC 105507 / MRE50).